Here is a 130-residue protein sequence, read N- to C-terminus: Albumin-1 D (130 aa).

The first 26 residues, 1–26 (MASVKLASLIVLFATLGMFLTKNVGA), serve as a signal peptide directing secretion. Disulfide bonds link cysteine 29–cysteine 46, cysteine 33–cysteine 48, and cysteine 41–cysteine 58. 2 consecutive propeptides follow at residues 64 to 69 (VFLKAN) and 123 to 130 (LLKSVSTA).

In terms of processing, the C-terminal glycine may be removed from PA1b. Major component of both the cotyledons and embryonic axes of mature seeds.

Functionally, PA1b binds to basic 7S globulin (BG) and stimulates its phosphorylation activity. Involved in the signal transduction system to regulate the growth and differentiation as a hormone peptide. Toxic to various insects through binding to a high affinity binding site in the insect gut. This chain is Albumin-1 D, found in Pisum sativum (Garden pea).